Consider the following 427-residue polypeptide: UBX domain-containing protein 2 (427 aa).

Disordered regions lie at residues 115 to 143 and 273 to 331; these read FDQSPSQIPFPSSNTEDSSEESDSSSRAS and ETSG…GVAD. Positions 311–326 are enriched in low complexity; the sequence is STTESQGESSSQQAES. Residues 349–425 form the UBX domain; that stretch reads PGPNVTRIQI…GIQNTALQFE (77 aa). Residue Ser371 is modified to Phosphoserine.

As to quaternary structure, interacts with cdc48.

Functionally, involved in CDC48-dependent protein degradation through the ubiquitin/proteasome pathway. This chain is UBX domain-containing protein 2 (ubx2), found in Schizosaccharomyces pombe (strain 972 / ATCC 24843) (Fission yeast).